The following is a 214-amino-acid chain: NAD(P)H-quinone oxidoreductase subunit 5, chloroplastic (214 aa).

A run of 2 helical transmembrane segments spans residues 84-104 and 152-172; these read LFPL…GIPF and SLAI…YSFF.

Belongs to the complex I subunit 5 family. As to quaternary structure, NDH is composed of at least 16 different subunits, 5 of which are encoded in the nucleus.

The protein resides in the plastid. Its subcellular location is the chloroplast thylakoid membrane. It catalyses the reaction a plastoquinone + NADH + (n+1) H(+)(in) = a plastoquinol + NAD(+) + n H(+)(out). The enzyme catalyses a plastoquinone + NADPH + (n+1) H(+)(in) = a plastoquinol + NADP(+) + n H(+)(out). NDH shuttles electrons from NAD(P)H:plastoquinone, via FMN and iron-sulfur (Fe-S) centers, to quinones in the photosynthetic chain and possibly in a chloroplast respiratory chain. The immediate electron acceptor for the enzyme in this species is believed to be plastoquinone. Couples the redox reaction to proton translocation, and thus conserves the redox energy in a proton gradient. The polypeptide is NAD(P)H-quinone oxidoreductase subunit 5, chloroplastic (ndhF) (Brachypodium pinnatum (Tor grass)).